The sequence spans 515 residues: ATP synthase subunit alpha (515 aa).

169–176 (GDRQTGKT) contributes to the ATP binding site.

Belongs to the ATPase alpha/beta chains family. F-type ATPases have 2 components, CF(1) - the catalytic core - and CF(0) - the membrane proton channel. CF(1) has five subunits: alpha(3), beta(3), gamma(1), delta(1), epsilon(1). CF(0) has three main subunits: a(1), b(2) and c(9-12). The alpha and beta chains form an alternating ring which encloses part of the gamma chain. CF(1) is attached to CF(0) by a central stalk formed by the gamma and epsilon chains, while a peripheral stalk is formed by the delta and b chains.

Its subcellular location is the cell inner membrane. The catalysed reaction is ATP + H2O + 4 H(+)(in) = ADP + phosphate + 5 H(+)(out). Functionally, produces ATP from ADP in the presence of a proton gradient across the membrane. The alpha chain is a regulatory subunit. The protein is ATP synthase subunit alpha of Neisseria gonorrhoeae (strain ATCC 700825 / FA 1090).